The primary structure comprises 588 residues: MEVIHGRPHCCRNLEGADILSNTFYSNGLHTPYETTIRPTASQARYQELREALPQCRLRWGADREYGGVLPVSLPEEHRPKCEPPRLMSKGHQHYGFGGEIWPKKLPIEQYYYMTQNKKSDVYGNDSLLPKPPNSAVKEICSPYPIEHPYHTHISRGSVFPTFTSPKDLYTGIKARTQQPFPPTVPTKACDTTILKTRGNPYRYELLDFPMDSKKKALTWPGQGVYYDFPKFVEKNKPVFYPKPPKTFAPNSSVNPWDTMSSAKDANIQRNLERSHWLTSYAHDFTGLGPMSPLELDDYHEKELAELTGQIGFDPQPQEKFHPALKTPRPLDGRIARLTQNQRPLEATVQIPPPCPDCTPRVLCAFHTFIPTSAEIMAMNNNLLSGITHKNQDVEEKIKEEQGLMSTCPLPTCYESKDLTSLYDVQSFPKITDTKKTDDLYWRQLEMKPLPISCSKSNHYIDYEPLKSAYRDPYAMCPNPVRLSKSNILQNKTDTADFTFDNFLSKPEFLGMNMESNEETRPLLDWIPRAGVPKHHSNLRNLRNTFSKSMAQKRLHNSIQEEQKDLRDKLQCGMRHQFFGYNGHHFYN.

Residue T219 is modified to Phosphothreonine. S406, S421, and S427 each carry phosphoserine. Y441 is modified (phosphotyrosine). Residues S457, S484, and S516 each carry the phosphoserine modification.

As to expression, predominantly expressed in the testes.

Its subcellular location is the cytoplasm. The protein resides in the cytoskeleton. It is found in the microtubule organizing center. It localises to the centrosome. The protein localises to the flagellum axoneme. Functionally, microtubule inner protein (MIP) part of the dynein-decorated doublet microtubules (DMTs) in flagellum axoneme. May serve to reinforce and thus stabilize the microtubule structure in the sperm flagella. The protein is Sperm-associated microtubule inner protein 4 (Spmip4) of Mus musculus (Mouse).